Consider the following 438-residue polypeptide: Adenylosuccinate synthetase (438 aa).

Residues 13–19 (GDEGKGK) and 41–43 (GHT) each bind GTP. The active-site Proton acceptor is the Asp-14. Mg(2+)-binding residues include Asp-14 and Gly-41. IMP is bound by residues 14–17 (DEGK), 39–42 (NAGH), Thr-130, Arg-144, Gln-225, Thr-240, and Arg-310. The active-site Proton donor is His-42. 306-312 (ATTGRLR) contacts substrate. GTP-binding positions include Arg-312, 338–340 (KLD), and 421–423 (STG).

The protein belongs to the adenylosuccinate synthetase family. As to quaternary structure, homodimer. The cofactor is Mg(2+).

It localises to the cytoplasm. It catalyses the reaction IMP + L-aspartate + GTP = N(6)-(1,2-dicarboxyethyl)-AMP + GDP + phosphate + 2 H(+). The protein operates within purine metabolism; AMP biosynthesis via de novo pathway; AMP from IMP: step 1/2. Functionally, plays an important role in the de novo pathway of purine nucleotide biosynthesis. Catalyzes the first committed step in the biosynthesis of AMP from IMP. This Vibrio vulnificus (strain YJ016) protein is Adenylosuccinate synthetase.